Consider the following 406-residue polypeptide: Probable 26S proteasome regulatory subunit 10B (406 aa).

191 to 198 (GPPGTGKT) contributes to the ATP binding site.

The protein belongs to the AAA ATPase family.

It is found in the cytoplasm. The protein localises to the nucleus. Functionally, the 26S proteasome is involved in the ATP-dependent degradation of ubiquitinated proteins. The regulatory (or ATPase) complex confers ATP dependency and substrate specificity to the 26S complex. The chain is Probable 26S proteasome regulatory subunit 10B (rpt-4) from Caenorhabditis elegans.